A 696-amino-acid chain; its full sequence is HIPL2 protein (696 aa).

The signal sequence occupies residues 1-24 (MAKTNQAITICSLLLLLLLSETTS). Asn38, Asn69, Asn74, Asn108, Asn124, Asn148, Asn175, Asn339, Asn431, Asn513, Asn519, Asn528, Asn581, and Asn651 each carry an N-linked (GlcNAc...) asparagine glycan. Ser672 is lipidated: GPI-anchor amidated serine. A propeptide spans 673–696 (SARKLCFSVFLLLSLLMMFLTLLD) (removed in mature form).

The protein belongs to the PQQ oxidoreductase GdhB family. The cofactor is pyrroloquinoline quinone.

Its subcellular location is the cell membrane. The sequence is that of HIPL2 protein (HIPL2) from Arabidopsis thaliana (Mouse-ear cress).